Reading from the N-terminus, the 252-residue chain is 5-oxoprolinase subunit A (252 aa).

This sequence belongs to the LamB/PxpA family. As to quaternary structure, forms a complex composed of PxpA, PxpB and PxpC.

It catalyses the reaction 5-oxo-L-proline + ATP + 2 H2O = L-glutamate + ADP + phosphate + H(+). In terms of biological role, catalyzes the cleavage of 5-oxoproline to form L-glutamate coupled to the hydrolysis of ATP to ADP and inorganic phosphate. The protein is 5-oxoprolinase subunit A of Staphylococcus epidermidis (strain ATCC 35984 / DSM 28319 / BCRC 17069 / CCUG 31568 / BM 3577 / RP62A).